We begin with the raw amino-acid sequence, 209 residues long: MAKLYFYYAAMNAGKSTVLLQSSYNYRERGMQTLLFTPAIDTRFQYGTICSRIGLSEQAYAFNNSDNLYVLTQEFQLQTQKYSCVLIDEAQFLTREQVYQLTEITDQMSIPVLAYGLRTDFRGELFPGSQFLLAWADELIELKTICHCGRKAIMNMRIDENGQAVIEGEQVLIGGNESYVATCRLHYKRGEAGKTFPRNKLFNKDTNTF.

ATP contacts are provided by residues 9 to 16 and 88 to 91; these read AAMNAGKS and DEAQ. The Proton acceptor role is filled by E89. C146, C148, C183, and H186 together coordinate Zn(2+).

The protein belongs to the thymidine kinase family. As to quaternary structure, homotetramer.

The protein localises to the cytoplasm. It catalyses the reaction thymidine + ATP = dTMP + ADP + H(+). The polypeptide is Thymidine kinase (Legionella pneumophila (strain Paris)).